We begin with the raw amino-acid sequence, 2621 residues long: Nonribosomal peptide synthetase dtpA (2621 aa).

An adenylation 1 region spans residues 446–844 (CMEQPNAEAI…GRKDQQVKIR (399 aa)). The 77-residue stretch at 978 to 1054 (QPYTQVEETL…EVALYSRALS (77 aa)) folds into the Carrier 1 domain. Position 1015 is an O-(pantetheine 4'-phosphoryl)serine (serine 1015). Residues 1095–1506 (EDIYPCTALQ…LNQLELAGPQ (412 aa)) are condensation 1. The tract at residues 1534-1930 (SRTQPGASAI…GRRDNQVKLR (397 aa)) is adenylation 2. Residues 2071–2147 (QPSTTQEALV…LFCTNASTSI (77 aa)) enclose the Carrier 2 domain. Serine 2108 is modified (O-(pantetheine 4'-phosphoryl)serine). The condensation 2 stretch occupies residues 2220–2618 (AIFKLHGSKV…HSARPIASID (399 aa)).

The protein belongs to the NRP synthetase family.

The protein operates within alkaloid biosynthesis. Its function is as follows. Nonribosomal peptide synthetase; part of the gene cluster that mediates the biosynthesis of the dimeric diketopiperazine alkaloid ditryptophenaline. The nonribosomal peptide synthase dtpA accepts L-tryptophan and L-phenylalanine as its substrates and forms the phenylalanyl-tryptophanyl cyclic dipeptide product cyclophenylalanyltryptophenyl. The N-methyltransferase dtpB is responsible for the N-methylation of cyclophenylalanyltryptophenyl to yield cyclo-N-methylphenylalanyltryptophenyl. The cytochrome P450 monooxygenase is responsible not only for pyrroloindole ring formation but also for concurrent dimerization of N-methylphenylalanyltryptophanyl diketopiperazine monomers into a homodimeric product. This is Nonribosomal peptide synthetase dtpA from Aspergillus flavus (strain ATCC 200026 / FGSC A1120 / IAM 13836 / NRRL 3357 / JCM 12722 / SRRC 167).